The chain runs to 284 residues: 4-diphosphocytidyl-2-C-methyl-D-erythritol kinase (284 aa).

Lysine 14 is an active-site residue. 98–108 (PMGGGLGGGSS) provides a ligand contact to ATP. The active site involves aspartate 140.

Belongs to the GHMP kinase family. IspE subfamily.

It carries out the reaction 4-CDP-2-C-methyl-D-erythritol + ATP = 4-CDP-2-C-methyl-D-erythritol 2-phosphate + ADP + H(+). It participates in isoprenoid biosynthesis; isopentenyl diphosphate biosynthesis via DXP pathway; isopentenyl diphosphate from 1-deoxy-D-xylulose 5-phosphate: step 3/6. Its function is as follows. Catalyzes the phosphorylation of the position 2 hydroxy group of 4-diphosphocytidyl-2C-methyl-D-erythritol. In Shewanella denitrificans (strain OS217 / ATCC BAA-1090 / DSM 15013), this protein is 4-diphosphocytidyl-2-C-methyl-D-erythritol kinase.